The sequence spans 571 residues: Proline--tRNA ligase (571 aa).

Belongs to the class-II aminoacyl-tRNA synthetase family. ProS type 1 subfamily. In terms of assembly, homodimer.

Its subcellular location is the cytoplasm. The enzyme catalyses tRNA(Pro) + L-proline + ATP = L-prolyl-tRNA(Pro) + AMP + diphosphate. Functionally, catalyzes the attachment of proline to tRNA(Pro) in a two-step reaction: proline is first activated by ATP to form Pro-AMP and then transferred to the acceptor end of tRNA(Pro). As ProRS can inadvertently accommodate and process non-cognate amino acids such as alanine and cysteine, to avoid such errors it has two additional distinct editing activities against alanine. One activity is designated as 'pretransfer' editing and involves the tRNA(Pro)-independent hydrolysis of activated Ala-AMP. The other activity is designated 'posttransfer' editing and involves deacylation of mischarged Ala-tRNA(Pro). The misacylated Cys-tRNA(Pro) is not edited by ProRS. The protein is Proline--tRNA ligase of Actinobacillus pleuropneumoniae serotype 3 (strain JL03).